A 119-amino-acid polypeptide reads, in one-letter code: Ribonuclease P protein component (119 aa).

This sequence belongs to the RnpA family. In terms of assembly, consists of a catalytic RNA component (M1 or rnpB) and a protein subunit.

It carries out the reaction Endonucleolytic cleavage of RNA, removing 5'-extranucleotides from tRNA precursor.. Its function is as follows. RNaseP catalyzes the removal of the 5'-leader sequence from pre-tRNA to produce the mature 5'-terminus. It can also cleave other RNA substrates such as 4.5S RNA. The protein component plays an auxiliary but essential role in vivo by binding to the 5'-leader sequence and broadening the substrate specificity of the ribozyme. The sequence is that of Ribonuclease P protein component from Borreliella burgdorferi (strain ATCC 35210 / DSM 4680 / CIP 102532 / B31) (Borrelia burgdorferi).